Reading from the N-terminus, the 126-residue chain is Ribosome-binding factor A (126 aa).

It belongs to the RbfA family. As to quaternary structure, monomer. Binds 30S ribosomal subunits, but not 50S ribosomal subunits or 70S ribosomes.

It localises to the cytoplasm. Functionally, one of several proteins that assist in the late maturation steps of the functional core of the 30S ribosomal subunit. Associates with free 30S ribosomal subunits (but not with 30S subunits that are part of 70S ribosomes or polysomes). Required for efficient processing of 16S rRNA. May interact with the 5'-terminal helix region of 16S rRNA. The polypeptide is Ribosome-binding factor A (Thermosynechococcus vestitus (strain NIES-2133 / IAM M-273 / BP-1)).